Reading from the N-terminus, the 243-residue chain is Carboxy-S-adenosyl-L-methionine synthase (243 aa).

Residues Tyr-40, 65 to 67, 90 to 91, 118 to 119, Asn-133, and Arg-200 contribute to the S-adenosyl-L-methionine site; these read GCS, DN, and DI.

It belongs to the class I-like SAM-binding methyltransferase superfamily. Cx-SAM synthase family. Homodimer.

The enzyme catalyses prephenate + S-adenosyl-L-methionine = carboxy-S-adenosyl-L-methionine + 3-phenylpyruvate + H2O. Its function is as follows. Catalyzes the conversion of S-adenosyl-L-methionine (SAM) to carboxy-S-adenosyl-L-methionine (Cx-SAM). The sequence is that of Carboxy-S-adenosyl-L-methionine synthase from Shewanella sp. (strain W3-18-1).